The chain runs to 626 residues: Basic helix-loop-helix ARNT-like protein 1 (626 aa).

The tract at residues 1 to 60 (MADQRMDISSTISDFMSPGPTDLLSSSLGTSGVDCNRKRKGSSTDYQESMDTDKDDPHGR) is disordered. Ser17 is modified (phosphoserine; by GSK3-beta). Low complexity predominate over residues 17-32 (SPGPTDLLSSSLGTSG). Thr21 bears the Phosphothreonine; by GSK3-beta mark. The Nuclear localization signal signature appears at 36–41 (NRKRKG). Positions 51 to 60 (DTDKDDPHGR) are enriched in basic and acidic residues. A bHLH domain is found at 72–125 (NAREAHSQIEKRRRDKMNSFIDELASLVPTCNAMSRKLDKLTVLRMAVQHMKTL). Ser78 is subject to Phosphoserine. The residue at position 90 (Ser90) is a Phosphoserine; by CK2. The Nuclear export signal 1 motif lies at 142–152 (LSDDELKHLIL). The region spanning 143–215 (SDDELKHLIL…EQLSSSDTAP (73 aa)) is the PAS 1 domain. A Glycyl lysine isopeptide (Lys-Gly) (interchain with G-Cter in SUMO2 and SUMO3) cross-link involves residue Lys252. Lys259 participates in a covalent cross-link: Glycyl lysine isopeptide (Lys-Gly) (interchain with G-Cter in SUMO); alternate. A Glycyl lysine isopeptide (Lys-Gly) (interchain with G-Cter in SUMO2); alternate cross-link involves residue Lys259. The PAS 2 domain occupies 326–396 (PQPAGGDIKV…ECHRQVLQTR (71 aa)). Positions 361-369 (LAYLPQELL) match the Nuclear export signal 2 motif. The 44-residue stretch at 402–445 (NCYKFKIKDGSFITLRSRWFSFMNPWTKEVEYIVSTNTVVLANV) folds into the PAC domain. Disordered stretches follow at residues 458–493 (ASPH…AGAG) and 511–596 (GSSP…PSND). The segment covering 484 to 493 (IPGGTRAGAG) has biased composition (gly residues). Residues 508 to 588 (RIRGSSPSSC…ISIDMIDNDQ (81 aa)) are interaction with CIART. Residues 511-521 (GSSPSSCGSSP) show a composition bias toward low complexity. An N6-acetyllysine modification is found at Lys538.

As to quaternary structure, component of the circadian clock oscillator which includes the CRY1/2 proteins, CLOCK or NPAS2, BMAL1 or BMAL2, CSNK1D and/or CSNK1E, TIMELESS and the PER1/2/3 proteins. Forms a heterodimer with CLOCK. The CLOCK-BMAL1 heterodimer is required for E-box-dependent transactivation, for CLOCK nuclear translocation and degradation, and, for phosphorylation of both CLOCK and BMAL1. Part of a nuclear complex which also includes RACK1 and PRKCA; RACK1 and PRKCA are recruited to the complex in a circadian manner. Interacts with NPAS2. Interacts with EZH2. Interacts with SUMO3. Interacts with SIRT1. Interacts with AHR. Interacts with ID1, ID2 and ID3. Interacts with DDX4. Interacts with OGT. Interacts with EED and SUZ12. Interacts with MTA1. Interacts with CIART. Interacts with HSP90. Interacts with KAT2B and EP300. Interacts with BHLHE40/DEC1 and BHLHE41/DEC2. Interacts with RELB and the interaction is enhanced in the presence of CLOCK. Interacts with PER1, PER2, CRY1 and CRY2 and this interaction requires a translocation to the nucleus. Interaction of the CLOCK-BMAL1 heterodimer with PER or CRY inhibits transcription activation. Interaction of the CLOCK-BMAL1 with CRY1 is independent of DNA but with PER2 is off DNA. The CLOCK-BMAL1 heterodimer interacts with GSK3B. Interacts with KDM5A. Interacts with KMT2A; in a circadian manner. Interacts with UBE3A. Interacts with PRKCG. Interacts with MAGEL2. Interacts with NCOA2. Interacts with THRAP3. The CLOCK-BMAL1 heterodimer interacts with PASD1. Interacts with PASD1. Interacts with USP9X. Interacts with PIWIL2 (via PIWI domain). Interacts with HDAC3. Interacts with HNF4A. In terms of processing, ubiquitinated, leading to its proteasomal degradation. Deubiquitinated by USP9X. Post-translationally, O-glycosylated; contains O-GlcNAc. O-glycosylation by OGT prevents protein degradation by inhibiting ubiquitination. It also stabilizes the CLOCK-BMAL1 heterodimer thereby increasing CLOCK-BMAL1-mediated transcription of genes in the negative loop of the circadian clock such as PER1/2/3 and CRY1/2. Acetylated on Lys-538 by CLOCK during the repression phase of the circadian cycle. Acetylation facilitates recruitment of CRY1 protein and initiates the repression phase of the circadian cycle. Acetylated at Lys-538 by KAT5 during the activation phase of the cycle, leading to recruitment of the positive transcription elongation factor b (P-TEFb) and BRD4, followed by productive elongation of circadian transcripts. Deacetylated by SIRT1, which may result in decreased protein stability. In terms of processing, phosphorylated upon dimerization with CLOCK. Phosphorylation enhances the transcriptional activity, alters the subcellular localization and decreases the stability of the CLOCK-BMAL1 heterodimer by promoting its degradation. Phosphorylation shows circadian variations in the liver with a peak between CT10 to CT14. Phosphorylation at Ser-90 by CK2 is essential for its nuclear localization, its interaction with CLOCK and controls CLOCK nuclear entry. Dephosphorylation at Ser-78 is important for dimerization with CLOCK and transcriptional activity. Post-translationally, sumoylated on Lys-259 upon dimerization with CLOCK. Predominantly conjugated to poly-SUMO2/3 rather than SUMO1 and the level of these conjugates undergo rhythmic variation, peaking at CT9-CT12. Sumoylation localizes it exclusively to the PML body and promotes its ubiquitination in the PML body, ubiquitin-dependent proteasomal degradation and the transcriptional activity of the CLOCK-BMAL1 heterodimer. Undergoes lysosome-mediated degradation in a time-dependent manner in the liver. As to expression, highly expressed in the suprachiasmatic nucleus (SCN). Also expressed in all other tissues examined including kidney, intestine, liver, heart, spleen, brain, muscle, lung, harderian gland and eye. Low expression in kidney and spleen.

It localises to the nucleus. The protein resides in the cytoplasm. It is found in the PML body. Functionally, transcriptional activator which forms a core component of the circadian clock. The circadian clock, an internal time-keeping system, regulates various physiological processes through the generation of approximately 24 hour circadian rhythms in gene expression, which are translated into rhythms in metabolism and behavior. It is derived from the Latin roots 'circa' (about) and 'diem' (day) and acts as an important regulator of a wide array of physiological functions including metabolism, sleep, body temperature, blood pressure, endocrine, immune, cardiovascular, and renal function. Consists of two major components: the central clock, residing in the suprachiasmatic nucleus (SCN) of the brain, and the peripheral clocks that are present in nearly every tissue and organ system. Both the central and peripheral clocks can be reset by environmental cues, also known as Zeitgebers (German for 'timegivers'). The predominant Zeitgeber for the central clock is light, which is sensed by retina and signals directly to the SCN. The central clock entrains the peripheral clocks through neuronal and hormonal signals, body temperature and feeding-related cues, aligning all clocks with the external light/dark cycle. Circadian rhythms allow an organism to achieve temporal homeostasis with its environment at the molecular level by regulating gene expression to create a peak of protein expression once every 24 hours to control when a particular physiological process is most active with respect to the solar day. Transcription and translation of core clock components (CLOCK, NPAS2, BMAL1, BMAL2, PER1, PER2, PER3, CRY1 and CRY2) plays a critical role in rhythm generation, whereas delays imposed by post-translational modifications (PTMs) are important for determining the period (tau) of the rhythms (tau refers to the period of a rhythm and is the length, in time, of one complete cycle). A diurnal rhythm is synchronized with the day/night cycle, while the ultradian and infradian rhythms have a period shorter and longer than 24 hours, respectively. Disruptions in the circadian rhythms contribute to the pathology of cardiovascular diseases, cancer, metabolic syndromes and aging. A transcription/translation feedback loop (TTFL) forms the core of the molecular circadian clock mechanism. Transcription factors, CLOCK or NPAS2 and BMAL1 or BMAL2, form the positive limb of the feedback loop, act in the form of a heterodimer and activate the transcription of core clock genes and clock-controlled genes (involved in key metabolic processes), harboring E-box elements (5'-CACGTG-3') within their promoters. The core clock genes: PER1/2/3 and CRY1/2 which are transcriptional repressors form the negative limb of the feedback loop and interact with the CLOCK|NPAS2-BMAL1|BMAL2 heterodimer inhibiting its activity and thereby negatively regulating their own expression. This heterodimer also activates nuclear receptors NR1D1/2 and RORA/B/G, which form a second feedback loop and which activate and repress BMAL1 transcription, respectively. BMAL1 positively regulates myogenesis and negatively regulates adipogenesis via the transcriptional control of the genes of the canonical Wnt signaling pathway. Plays a role in normal pancreatic beta-cell function; regulates glucose-stimulated insulin secretion via the regulation of antioxidant genes NFE2L2/NRF2 and its targets SESN2, PRDX3, CCLC and CCLM. Negatively regulates the mTORC1 signaling pathway; regulates the expression of MTOR and DEPTOR. Controls diurnal oscillations of Ly6C inflammatory monocytes; rhythmic recruitment of the PRC2 complex imparts diurnal variation to chemokine expression that is necessary to sustain Ly6C monocyte rhythms. Regulates the expression of HSD3B2, STAR, PTGS2, CYP11A1, CYP19A1 and LHCGR in the ovary and also the genes involved in hair growth. Plays an important role in adult hippocampal neurogenesis by regulating the timely entry of neural stem/progenitor cells (NSPCs) into the cell cycle and the number of cell divisions that take place prior to cell-cycle exit. Regulates the circadian expression of CIART and KLF11. The CLOCK-BMAL1 heterodimer regulates the circadian expression of SERPINE1/PAI1, VWF, B3, CCRN4L/NOC, NAMPT, DBP, MYOD1, PPARGC1A, PPARGC1B, SIRT1, GYS2, F7, NGFR, GNRHR, BHLHE40/DEC1, ATF4, MTA1, KLF10 and also genes implicated in glucose and lipid metabolism. Promotes rhythmic chromatin opening, regulating the DNA accessibility of other transcription factors. The NPAS2-BMAL1 heterodimer positively regulates the expression of MAOA, F7 and LDHA and modulates the circadian rhythm of daytime contrast sensitivity by regulating the rhythmic expression of adenylate cyclase type 1 (ADCY1) in the retina. The preferred binding motif for the CLOCK-BMAL1 heterodimer is 5'-CACGTGA-3', which contains a flanking adenine nucleotide at the 3-prime end of the canonical 6-nucleotide E-box sequence. CLOCK specifically binds to the half-site 5'-CAC-3', while BMAL1 binds to the half-site 5'-GTGA-3'. The CLOCK-BMAL1 heterodimer also recognizes the non-canonical E-box motifs 5'-AACGTGA-3' and 5'-CATGTGA-3'. Essential for the rhythmic interaction of CLOCK with ASS1 and plays a critical role in positively regulating CLOCK-mediated acetylation of ASS1. Plays a role in protecting against lethal sepsis by limiting the expression of immune checkpoint protein CD274 in macrophages in a PKM2-dependent manner. Regulates the diurnal rhythms of skeletal muscle metabolism via transcriptional activation of genes promoting triglyceride synthesis (DGAT2) and metabolic efficiency (COQ10B). This Nannospalax galili (Northern Israeli blind subterranean mole rat) protein is Basic helix-loop-helix ARNT-like protein 1 (Bmal1).